The primary structure comprises 267 residues: Ribosyldihydronicotinamide dehydrogenase-like protein traD (267 aa).

Residues H9, 15-16 (LN), and 100-103 (LWWF) contribute to the FAD site. 122 to 124 (GHG) lines the substrate pocket. FAD is bound by residues 152–155 (TLGG) and Y160.

Belongs to the NAD(P)H dehydrogenase (quinone) family. In terms of assembly, homodimer. It depends on FAD as a cofactor.

Its pathway is secondary metabolite biosynthesis. In terms of biological role, ribosyldihydronicotinamide dehydrogenase-like protein; part of the tra gene cluster that produces terrestric acid. The clavatol biosynthesis cluster cla and the terrestric acid cluster tra are both involved in the production of peniphenones and penilactones. The non-reducing PKS claF is responsible for the formation of clavatol from successive condensations of 3 malonyl-CoA units, presumably with a simple acetyl-CoA starter unit, and 2 methylation steps. The esterase claE probably collaborates with claF by catalyzing the hydrolysis of ACP-bound acyl intermediates to free the ACP from stalled intermediates. The clavatol oxidase claD then converts clavatol to hydroxyclavatol. Spontaneous dehydration of hydroxyclavatol leads to the accumulation of the highly active ortho-quinone methide. On the other hand, the PKS-NRPS hybrid traA is involved in the formation of crustosic acid, with the help of traB and traD. The polyketide synthase module (PKS) of traA is responsible for the synthesis of the polyketide backbone via the condensation of an acetyl-CoA starter unit with 3 malonyl-CoA units. The downstream nonribosomal peptide synthetase (NRPS) module then amidates the carboxyl end of the polyketide with L-malic acid. Because traA lacks a designated enoylreductase (ER) domain, the required activity is provided the enoyl reductase traG. Crustosic acid undergoes decarboxylation and isomerization to the terrestric acid, catalyzed by the 2-oxoglutarate-dependent dioxygenase traH. Both acids are further converted to the 2 gamma-butyrolactones (R)-5-methyltetronic acid and (S)-5-carboxylmethyltetronic acid, with involvement of the cytochrome P450 monooxygenase claJ. Spontaneous addition of the methide to these gamma-butyrolactones leads to peniphenone D and penilactone D, which undergo again stereospecific attacking by methide to give penilactones A and B. In Penicillium crustosum (Blue mold fungus), this protein is Ribosyldihydronicotinamide dehydrogenase-like protein traD.